The sequence spans 195 residues: Thymidylate kinase (195 aa).

7 to 14 (GIDGSGKT) lines the ATP pocket.

This sequence belongs to the thymidylate kinase family.

The enzyme catalyses dTMP + ATP = dTDP + ADP. Its function is as follows. Phosphorylation of dTMP to form dTDP in both de novo and salvage pathways of dTTP synthesis. The chain is Thymidylate kinase (tmk) from Aquifex aeolicus (strain VF5).